The primary structure comprises 250 residues: Glutamate racemase (250 aa).

Residues 7-8 (DS) and 39-40 (YG) each bind substrate. Cysteine 70 functions as the Proton donor/acceptor in the catalytic mechanism. Position 71-72 (71-72 (NT)) interacts with substrate. The Proton donor/acceptor role is filled by cysteine 180. 181–182 (TH) is a substrate binding site.

It belongs to the aspartate/glutamate racemases family.

It carries out the reaction L-glutamate = D-glutamate. The protein operates within cell wall biogenesis; peptidoglycan biosynthesis. Provides the (R)-glutamate required for cell wall biosynthesis. This chain is Glutamate racemase, found in Campylobacter jejuni subsp. jejuni serotype O:2 (strain ATCC 700819 / NCTC 11168).